A 432-amino-acid chain; its full sequence is Mitochondrial distribution and morphology protein 12 (432 aa).

The SMP-LTD domain occupies 1–432; the sequence is MSIEVDWRAA…VFPSFWTFLI (432 aa). Disordered stretches follow at residues 182-273 and 354-377; these read WTDP…PRMR and QQEA…PKRQ. Residues 214 to 234 show a composition bias toward low complexity; it reads TSNPTSRPSTSSTLPSHPSAS. Basic and acidic residues-rich tracts occupy residues 243-253 and 355-364; these read TGKEHGSLAED and QEARGQDDRP.

The protein belongs to the MDM12 family. Component of the ER-mitochondria encounter structure (ERMES) or MDM complex, composed of mmm1, mdm10, mdm12 and mdm34. A mmm1 homodimer associates with one molecule of mdm12 on each side in a pairwise head-to-tail manner, and the SMP-LTD domains of mmm1 and mdm12 generate a continuous hydrophobic tunnel for phospholipid trafficking.

It localises to the mitochondrion outer membrane. It is found in the endoplasmic reticulum membrane. In terms of biological role, component of the ERMES/MDM complex, which serves as a molecular tether to connect the endoplasmic reticulum (ER) and mitochondria. Components of this complex are involved in the control of mitochondrial shape and protein biogenesis, and function in nonvesicular lipid trafficking between the ER and mitochondria. Mdm12 is required for the interaction of the ER-resident membrane protein MMM1 and the outer mitochondrial membrane-resident beta-barrel protein mdm10. The mdm12-mmm1 subcomplex functions in the major beta-barrel assembly pathway that is responsible for biogenesis of all mitochondrial outer membrane beta-barrel proteins, and acts in a late step after the SAM complex. The mdm10-mdm12-mmm1 subcomplex further acts in the TOM40-specific pathway after the action of the mdm12-mmm1 complex. Essential for establishing and maintaining the structure of mitochondria and maintenance of mtDNA nucleoids. This chain is Mitochondrial distribution and morphology protein 12, found in Aspergillus flavus (strain ATCC 200026 / FGSC A1120 / IAM 13836 / NRRL 3357 / JCM 12722 / SRRC 167).